Here is a 380-residue protein sequence, read N- to C-terminus: Pectin lyase (380 aa).

The first 20 residues, 1 to 20 (MRSASILSAALAAFAPLASA), serve as a signal peptide directing secretion. The N-linked (GlcNAc...) asparagine glycan is linked to Asn-130.

The protein belongs to the polysaccharide lyase 1 family.

It is found in the secreted. It catalyses the reaction Eliminative cleavage of (1-&gt;4)-alpha-D-galacturonan methyl ester to give oligosaccharides with 4-deoxy-6-O-methyl-alpha-D-galact-4-enuronosyl groups at their non-reducing ends.. This Colletotrichum gloeosporioides (Anthracnose fungus) protein is Pectin lyase (PNLA).